The sequence spans 526 residues: Sterol 14-alpha demethylase CYP51A (526 aa).

A helical membrane pass occupies residues 27–47; sequence IGFAVFLVLSVVLNVLNQLLF. Residue Y123 coordinates lanosterol. C470 is a heme binding site.

Belongs to the cytochrome P450 family. Heme serves as cofactor.

The protein resides in the endoplasmic reticulum membrane. The catalysed reaction is a 14alpha-methyl steroid + 3 reduced [NADPH--hemoprotein reductase] + 3 O2 = a Delta(14) steroid + formate + 3 oxidized [NADPH--hemoprotein reductase] + 4 H2O + 4 H(+). It catalyses the reaction a 14alpha-methyl steroid + reduced [NADPH--hemoprotein reductase] + O2 = a 14alpha-hydroxymethyl steroid + oxidized [NADPH--hemoprotein reductase] + H2O + H(+). It carries out the reaction a 14alpha-hydroxymethyl steroid + reduced [NADPH--hemoprotein reductase] + O2 = a 14alpha-formyl steroid + oxidized [NADPH--hemoprotein reductase] + 2 H2O + H(+). The enzyme catalyses a 14alpha-formyl steroid + reduced [NADPH--hemoprotein reductase] + O2 = a Delta(14) steroid + formate + oxidized [NADPH--hemoprotein reductase] + H2O + 2 H(+). The catalysed reaction is lanosterol + 3 reduced [NADPH--hemoprotein reductase] + 3 O2 = 4,4-dimethyl-5alpha-cholesta-8,14,24-trien-3beta-ol + formate + 3 oxidized [NADPH--hemoprotein reductase] + 4 H2O + 4 H(+). It catalyses the reaction lanosterol + reduced [NADPH--hemoprotein reductase] + O2 = 32-hydroxylanosterol + oxidized [NADPH--hemoprotein reductase] + H2O + H(+). It carries out the reaction 32-hydroxylanosterol + reduced [NADPH--hemoprotein reductase] + O2 = 32-oxolanosterol + oxidized [NADPH--hemoprotein reductase] + 2 H2O + H(+). The enzyme catalyses 32-oxolanosterol + reduced [NADPH--hemoprotein reductase] + O2 = 4,4-dimethyl-5alpha-cholesta-8,14,24-trien-3beta-ol + formate + oxidized [NADPH--hemoprotein reductase] + H2O + 2 H(+). The catalysed reaction is eburicol + 3 reduced [NADPH--hemoprotein reductase] + 3 O2 = 14-demethyleburicol + formate + 3 oxidized [NADPH--hemoprotein reductase] + 4 H2O + 4 H(+). It catalyses the reaction eburicol + reduced [NADPH--hemoprotein reductase] + O2 = 32-hydroxyeburicol + oxidized [NADPH--hemoprotein reductase] + H2O + H(+). It carries out the reaction 32-hydroxyeburicol + reduced [NADPH--hemoprotein reductase] + O2 = 32-oxoeburicol + oxidized [NADPH--hemoprotein reductase] + 2 H2O + H(+). The enzyme catalyses 32-oxoeburicol + reduced [NADPH--hemoprotein reductase] + O2 = 14-demethyleburicol + formate + oxidized [NADPH--hemoprotein reductase] + H2O + 2 H(+). It participates in steroid metabolism; ergosterol biosynthesis. Its function is as follows. Together with cyp51A and cyp51C, encodes the sterol 14alpha-demethylase that plays a critical role in the third module of ergosterol biosynthesis pathway, being ergosterol the major sterol component in fungal membranes that participates in a variety of functions. Essential for ascospore production. The third module or late pathway involves the ergosterol synthesis itself through consecutive reactions that mainly occur in the endoplasmic reticulum (ER) membrane. In filamentous fungi, during the initial step of this module, lanosterol (lanosta-8,24-dien-3beta-ol) can be metabolized to eburicol. Sterol 14alpha-demethylase catalyzes the three-step oxidative removal of the 14alpha-methyl group (C-32) of both these sterols in the form of formate, and converts eburicol and lanosterol to 14-demethyleburicol (4,4,24-trimethylergosta-8,14,24(28)-trienol) and 4,4-dimethyl-5alpha-cholesta-8,14,24-trien-3beta-ol, respectively, which are further metabolized by other enzymes in the pathway to ergosterol. Can also use substrates not intrinsic to fungi, such as 24,25-dihydrolanosterol (DHL), producing 4,4'-dimethyl-8,14-cholestadien-3-beta-ol, but at lower rates than the endogenous substrates. The chain is Sterol 14-alpha demethylase CYP51A from Gibberella zeae (strain ATCC MYA-4620 / CBS 123657 / FGSC 9075 / NRRL 31084 / PH-1) (Wheat head blight fungus).